Reading from the N-terminus, the 445-residue chain is Cytochrome P450 monooxygenase penB (445 aa).

Position 381 (Cys381) interacts with heme.

This sequence belongs to the cytochrome P450 family. The cofactor is heme.

The protein operates within secondary metabolite biosynthesis. It participates in alkaloid biosynthesis. Its pathway is mycotoxin biosynthesis. Its function is as follows. Cytochrome P450 monooxygenase; part of the gene cluster that mediates the biosynthesis of penigequinolones, potent insecticidal alkaloids that contain a highly modified 10-carbon prenyl group. The first stage is catalyzed by the nonribosomal peptide synthetase penN that condenses anthranilic acid and O-methyl-L-tyrosine to produce 4'-methoxycyclopeptin. 4'-methoxycyclopeptin is then converted to 4'-methoxydehydrocyclopeptin by the ketoglutarate-dependent dioxygenase penM through dehydrogenation to form a double bond between C-alpha and C-beta of the O-methyltyrosine side chain. PenM also converts its first product methoxydehydrocyclopeptin to 4'-methoxycyclopenin. The following conversion of 4'methoxycyclopenin into 4'-methoxyviridicatin is catalyzed by the cyclopenase penL. 4'-methoxyviridicatin is the precursor of quinolone natural products, and is further converted to quinolinone B. The prenyltransferase penI then catalyzes the canonical Friedel-Crafts alkylation of quinolinone B with dimethylallyl cation to yield dimethylallyl quinolone, which is subjected to FAD-dependent dehydrogenation by the FAD-linked oxidoreductase penH to yield conjugated aryl diene. The delta(3') double bond then serves as the site of the second alkylation with DMAPP catalyzed by the prenyltransferase penG to yield a carbenium ion intermediate, which can be attacked by H(2)O to yield a styrenyl quinolone containing a C3'-hydroxyprenyl chain, or undergo cyclization to yield yaequinolones J1 and J2. The conversion of the styrenyl quinolone into the tetrahydrofuran-containing yaequinolone C is performed by the FAD-dependent monooxygenase penE and involves epoxidation of the terminal C7'-C8' olefin, followed by epoxide ring opening initiated by the C3' hydroxyl group. The predicted cysteine hydrolase penJ acts as an epoxide hydrolase that enhances the rate of the 5-exo-tet cyclization step, increasing the yield of yaequinolone C. PenF catalyzes the cationic rearrangement of the epoxide formed by penE (before ring opening to produce yaequinolone C) into yaequinolone D. Finally, the short-chain dehydrogenase/reductase (SDR)-like reductase penD, catalyzes both the dehydration of yaequinolone D and the reduction of the resulting oxonium to yield penigequinolone. In Penicillium thymicola, this protein is Cytochrome P450 monooxygenase penB.